The primary structure comprises 1098 residues: Contactin-5 (1098 aa).

An N-terminal signal peptide occupies residues 1-23 (MASCWRLILFLSVTRWLSDYSEA). Ig-like C2-type domains are found at residues 98–189 (PVFV…ATLQ), 195–281 (NFSG…RVLS), 299–384 (PKIE…GQLQ), 389–473 (PHWV…AELK), 479–568 (PSFE…LSVK), and 570–659 (PTRI…DSVS). Cys-122 and Cys-172 are disulfide-bonded. N-linked (GlcNAc...) asparagine glycans are attached at residues Asn-137 and Asn-195. 2 cysteine pairs are disulfide-bonded: Cys-216–Cys-268 and Cys-321–Cys-368. 3 N-linked (GlcNAc...) asparagine glycosylation sites follow: Asn-396, Asn-448, and Asn-539. Intrachain disulfides connect Cys-410-Cys-457, Cys-502-Cys-550, and Cys-592-Cys-649. 4 consecutive Fibronectin type-III domains span residues 672–770 (PPGV…TNEA), 775–872 (APSN…SAEG), 877–971 (APTD…TKRH), and 976–1066 (PPGN…SYSG). N-linked (GlcNAc...) asparagine glycans are attached at residues Asn-778, Asn-815, and Asn-930. Residues 956-982 (GYGPPSREASTTTKRHPPREPPGNLRW) are disordered. An N-linked (GlcNAc...) asparagine glycan is attached at Asn-1001. The GPI-anchor amidated serine moiety is linked to residue Ser-1071. The propeptide at 1072-1098 (AQSTLHSLSKWSSVTLLLALMLPSSSW) is removed in mature form.

Belongs to the immunoglobulin superfamily. Contactin family. In terms of assembly, interacts with PTPRG. As to expression, expressed in the nervous system. Preferentially expressed in the central auditory pathways.

It is found in the cell membrane. In terms of biological role, contactins mediate cell surface interactions during nervous system development. Has some neurite outgrowth-promoting activity in the cerebral cortical neurons but not in hippocampal neurons. Involved in neuronal activity in the auditory system. The polypeptide is Contactin-5 (Cntn5) (Mus musculus (Mouse)).